The sequence spans 1892 residues: Sodium channel protein type 4 subunit alpha A (1892 aa).

Residues 1–125 (MATILPPPGT…RGAIKILIHS (125 aa)) are Cytoplasmic-facing. Residues 34-54 (APKAGAHEEEEPPTPNPDLEA) are disordered. One copy of the I repeat lies at 107–433 (ILSPFSLVRR…VVAMAYDEQN (327 aa)). A helical transmembrane segment spans residues 126-144 (LFSTLIMITILSNCVFMTM). Residues 145-151 (SNPPAWS) are Extracellular-facing. A helical membrane pass occupies residues 152 to 172 (KTVEYVFTGIYTFEATVKVLS). The Cytoplasmic segment spans residues 173 to 186 (RGFCVGPFTFLRDP). A helical transmembrane segment spans residues 187–204 (WNWLDFMVISMAYITEFV). Residues 205–210 (DLGNVS) lie on the Extracellular side of the membrane. Residue N208 is glycosylated (N-linked (GlcNAc...) asparagine). Residues 211-227 (ALRTFRVLRALKTITVI) form a helical membrane-spanning segment. Topologically, residues 228–246 (PGLKTIVAALIQSVKKMVD) are cytoplasmic. The helical transmembrane segment at 247 to 266 (VMILTVFALAVFALVGLQLF) threads the bilayer. Over 267-370 (MGNLRHKCIR…PNYGYTSFDS (104 aa)) the chain is Extracellular. A disulfide bridge links C274 with C339. Residues N281, N294, and N341 are each glycosylated (N-linked (GlcNAc...) asparagine). C348 and C354 are oxidised to a cystine. Positions 371-395 (FGWAFLALFRLMTQDNWESLFQLTL) form an intramembrane region, pore-forming. Over 396–402 (RAAGQTY) the chain is Extracellular. The helical transmembrane segment at 403–423 (MLFFVVVIFLGSFYLINLILA) threads the bilayer. The Cytoplasmic portion of the chain corresponds to 424-612 (VVAMAYDEQN…KWVHFVVMDP (189 aa)). The II repeat unit spans residues 594–866 (CCEKWVVFKK…QIAIGRITRG (273 aa)). A helical transmembrane segment spans residues 613–631 (FVDLAITICIVLNTLFMAM). Residues 632-642 (EHYPMTEEFDY) lie on the Extracellular side of the membrane. Residues 643–662 (MLSVGNLVFTGIFAAEMFFK) form a helical membrane-spanning segment. At 663–676 (LIAMDPYYYFQVGW) the chain is on the cytoplasmic side. The helical transmembrane segment at 677–696 (NIFDSIIVTLSLVELGLANV) threads the bilayer. At 697–698 (QG) the chain is on the extracellular side. Residues 699-716 (LSVLRSFRLLRVFKLAKS) form a helical membrane-spanning segment. Over 717 to 732 (WPTLNMLIKIIGNSVG) the chain is Cytoplasmic. Residues 733-751 (ALGNLTLVLAIIVFIFAVV) form a helical membrane-spanning segment. The Extracellular portion of the chain corresponds to 752–780 (GMQLFGKSYKDCVCKISSDCELPRWHMND). Residues C765 and C771 are joined by a disulfide bond. The pore-forming intramembrane region spans 781–801 (FFHSFLIVFRILCGEWIETMW). Residues 802–812 (DCMEVAGAGMC) are Extracellular-facing. A disulfide bridge links C803 with C812. Residues 813 to 831 (LVVFMMVMVIGNLVVLNLF) form a helical membrane-spanning segment. Residues 832 to 1071 (LALLLSSFSG…TCFTIVEHDW (240 aa)) are Cytoplasmic-facing. 2 disordered regions span residues 884 to 905 (REPQ…TEGM) and 945 to 982 (LGES…GVED). A compositionally biased stretch (acidic residues) spans 948–971 (SDSENPSEDDDDQEDDVDSEVTCE). The stretch at 1052 to 1366 (KGKKWWNLRK…KKYYEAMKKL (315 aa)) is one III repeat. Residues 1072-1089 (FETFIIFMILLSSGALAF) traverse the membrane as a helical segment. Topologically, residues 1090–1102 (EDIYIERRRTVKI) are extracellular. A helical transmembrane segment spans residues 1103–1121 (VLEFADKVFTFIFVIEMLL). Topologically, residues 1122 to 1135 (KWVAYGFKTYFTNA) are cytoplasmic. Residues 1136–1154 (WCWLDFFIVDISLISLSAN) form a helical membrane-spanning segment. The Extracellular portion of the chain corresponds to 1155–1162 (LMGFSDLG). A helical membrane pass occupies residues 1163-1181 (PIKSLRTLRALRPLRALSR). The Cytoplasmic segment spans residues 1182 to 1198 (FEGMRVVVNALIGAIPS). The chain crosses the membrane as a helical span at residues 1199-1218 (IFNVLLVCLIFWLIFSIMGV). Residues 1219-1270 (NLFAGKFYRCINTTTAELFPISVVNNKSDCVALQEATQEARWVNVKVNYDNV) are Extracellular-facing. The cysteines at positions 1228 and 1248 are disulfide-linked. Residues N1230 and N1244 are each glycosylated (N-linked (GlcNAc...) asparagine). The segment at residues 1271-1292 (AKGYLSLLQIATFKGWMDIMYP) is an intramembrane region (pore-forming). At 1293–1309 (AVDSREVEEQPSYEINL) the chain is on the extracellular side. Residues 1310–1331 (YMYIYFVIFIIFGSFFTLNLFI) traverse the membrane as a helical segment. Residues 1332–1394 (GVIIDNFNQQ…LVFDFISQQF (63 aa)) are Cytoplasmic-facing. The segment at 1350 to 1352 (IFM) is important for rapid channel inactivation. One copy of the IV repeat lies at 1375–1673 (IPRPANLIQG…WEKFDTGGTQ (299 aa)). A helical transmembrane segment spans residues 1395–1412 (FDIFIMVLICLNMVTMMV). Residues 1413–1423 (ETDDQSPAKED) are Extracellular-facing. A helical membrane pass occupies residues 1424–1442 (FLFKVNVAFIVVFTGECTL). Over 1443 to 1454 (KLFALRHYFFTN) the chain is Cytoplasmic. Residues 1455–1472 (GWNIFDFIVVILSIAGTM) form a helical membrane-spanning segment. Over 1473–1485 (LSDIIEKYFVSPT) the chain is Extracellular. The chain crosses the membrane as a helical span at residues 1486–1502 (LFRVIRLARIGRILRLI). Residues 1503–1521 (KGARGIRTLLFALMMSLPA) lie on the Cytoplasmic side of the membrane. The helical transmembrane segment at 1522-1539 (LFNIGLLLFLIMFIFSIF) threads the bilayer. The Extracellular portion of the chain corresponds to 1540–1561 (GMSNFAYVKKEAGINDMFNFET). The segment at residues 1562–1584 (FGSSIICLFQITTSAGWDTLLLP) is an intramembrane region (pore-forming). Residues 1585-1614 (MLNKEPPDCDPAFENPGTDVKGNCGNPMMG) lie on the Extracellular side of the membrane. Cysteines 1593 and 1608 form a disulfide. A helical transmembrane segment spans residues 1615–1637 (MVFFCSYIIISFLVVVNMYIAII). At 1638-1892 (LENFNVAQEE…TQTILRETNV (255 aa)) the chain is on the cytoplasmic side. In terms of domain architecture, IQ spans 1767–1796 (EDMAAVVIQRAYRNHLHKRGIHHAAYIQRS). A disordered region spans residues 1836 to 1856 (RRRPDPQTRCSGARCSPEPPE).

This sequence belongs to the sodium channel (TC 1.A.1.10) family. Nav1.4/SCN4A subfamily. Voltage-gated sodium (Nav) channels consist of an ion-conducting alpha subunit which is functional on its own associated with regulatory beta subunits.

It is found in the cell membrane. It carries out the reaction Na(+)(in) = Na(+)(out). Its function is as follows. Pore-forming subunit of a voltage-gated sodium (Nav) channel that directly mediates the depolarizing phase of action potentials in excitable membranes. Navs, also called VGSCs (voltage-gated sodium channels) or VDSCs (voltage-dependent sodium channels), operate by switching between closed and open conformations depending on the voltage difference across the membrane. In the open conformation they allow Na(+) ions to selectively pass through the pore, along their electrochemical gradient. The influx of Na+ ions provokes membrane depolarization, initiating the propagation of electrical signals throughout cells and tissues. This Takifugu rubripes (Japanese pufferfish) protein is Sodium channel protein type 4 subunit alpha A (scn4aa).